The following is a 191-amino-acid chain: MKILEDRIRQDGTVLTGNVLKVDNFLNHQVDPQLMNELGQEFARRFQDAHITKILTVESSGIAPAVMAGLHLNVPVIFARKHKSLTLTDNLYTAKVYSYTKQVTNEISIDRRFLAADDRVLIIDDFLANGQAVQGLLDIAKTAQITVAGVGVVIEKRFQKGHQMVTDAGIQLEALASIASFEAGQVIFAQD.

Xanthine is bound by residues leucine 20 and asparagine 27. Residue 128–132 (ANGQA) coordinates 5-phospho-alpha-D-ribose 1-diphosphate. Lysine 156 is a binding site for xanthine.

This sequence belongs to the purine/pyrimidine phosphoribosyltransferase family. Xpt subfamily. Homodimer.

It localises to the cytoplasm. The enzyme catalyses XMP + diphosphate = xanthine + 5-phospho-alpha-D-ribose 1-diphosphate. It participates in purine metabolism; XMP biosynthesis via salvage pathway; XMP from xanthine: step 1/1. Functionally, converts the preformed base xanthine, a product of nucleic acid breakdown, to xanthosine 5'-monophosphate (XMP), so it can be reused for RNA or DNA synthesis. The sequence is that of Xanthine phosphoribosyltransferase from Levilactobacillus brevis (strain ATCC 367 / BCRC 12310 / CIP 105137 / JCM 1170 / LMG 11437 / NCIMB 947 / NCTC 947) (Lactobacillus brevis).